A 179-amino-acid polypeptide reads, in one-letter code: UPF0227 protein Shew185_2404 (179 aa).

Belongs to the UPF0227 family.

The polypeptide is UPF0227 protein Shew185_2404 (Shewanella baltica (strain OS185)).